A 92-amino-acid polypeptide reads, in one-letter code: Bombyxin A-4 (92 aa).

The first 19 residues, 1–19 (MKILLAIALMLSTVMWVST), serve as a signal peptide directing secretion. Gln20 is modified (pyrrolidone carboxylic acid). Cystine bridges form between Cys29-Cys79, Cys41-Cys92, and Cys78-Cys83. Positions 50–70 (SGAQFASYGSAWLMPYSEGRG) are cleaved as a propeptide — c peptide like.

The protein belongs to the insulin family. In terms of assembly, heterodimer of a B chain and an A chain linked by two disulfide bonds.

The protein localises to the secreted. Functionally, brain peptide responsible for activation of prothoracic glands to produce ecdysone in insects. This chain is Bombyxin A-4 (BBXA4), found in Bombyx mori (Silk moth).